A 1058-amino-acid polypeptide reads, in one-letter code: Carbamoyl phosphate synthase large chain (1058 aa).

Residues methionine 1–aspartate 399 form a carboxyphosphate synthetic domain region. Residues arginine 127, arginine 167, glycine 173, glycine 174, glutamate 206, valine 208, glutamate 213, glycine 239, isoleucine 240, histidine 241, glutamine 282, and glutamate 296 each coordinate ATP. An ATP-grasp 1 domain is found at glycine 131–leucine 325. Mg(2+)-binding residues include glutamine 282, glutamate 296, and asparagine 298. Glutamine 282, glutamate 296, and asparagine 298 together coordinate Mn(2+). Positions methionine 400–leucine 538 are oligomerization domain. Positions lysine 539–aspartate 924 are carbamoyl phosphate synthetic domain. The ATP-grasp 2 domain maps to alanine 663–threonine 856. Positions 699, 738, 740, 745, 770, 771, 772, 773, 813, and 827 each coordinate ATP. Residues glutamine 813, glutamate 827, and asparagine 829 each contribute to the Mg(2+) site. Mn(2+) contacts are provided by glutamine 813, glutamate 827, and asparagine 829. Residues methionine 923 to glutamate 1058 form the MGS-like domain. Positions leucine 925–glutamate 1058 are allosteric domain.

It belongs to the CarB family. Composed of two chains; the small (or glutamine) chain promotes the hydrolysis of glutamine to ammonia, which is used by the large (or ammonia) chain to synthesize carbamoyl phosphate. Tetramer of heterodimers (alpha,beta)4. The cofactor is Mg(2+). Mn(2+) is required as a cofactor.

It catalyses the reaction hydrogencarbonate + L-glutamine + 2 ATP + H2O = carbamoyl phosphate + L-glutamate + 2 ADP + phosphate + 2 H(+). It carries out the reaction hydrogencarbonate + NH4(+) + 2 ATP = carbamoyl phosphate + 2 ADP + phosphate + 2 H(+). It participates in amino-acid biosynthesis; L-arginine biosynthesis; carbamoyl phosphate from bicarbonate: step 1/1. It functions in the pathway pyrimidine metabolism; UMP biosynthesis via de novo pathway; (S)-dihydroorotate from bicarbonate: step 1/3. Its function is as follows. Large subunit of the glutamine-dependent carbamoyl phosphate synthetase (CPSase). CPSase catalyzes the formation of carbamoyl phosphate from the ammonia moiety of glutamine, carbonate, and phosphate donated by ATP, constituting the first step of 2 biosynthetic pathways, one leading to arginine and/or urea and the other to pyrimidine nucleotides. The large subunit (synthetase) binds the substrates ammonia (free or transferred from glutamine from the small subunit), hydrogencarbonate and ATP and carries out an ATP-coupled ligase reaction, activating hydrogencarbonate by forming carboxy phosphate which reacts with ammonia to form carbamoyl phosphate. This is Carbamoyl phosphate synthase large chain from Methanobrevibacter smithii (strain ATCC 35061 / DSM 861 / OCM 144 / PS).